We begin with the raw amino-acid sequence, 363 residues long: UDP-N-acetylenolpyruvoylglucosamine reductase (363 aa).

Residues 25-201 enclose the FAD-binding PCMH-type domain; sequence IGPVARRMLT…RSAPVRYREL (177 aa). Arginine 168 is a catalytic residue. The Proton donor role is filled by serine 249. Glutamate 352 is an active-site residue.

Belongs to the MurB family. It depends on FAD as a cofactor.

It localises to the cytoplasm. The enzyme catalyses UDP-N-acetyl-alpha-D-muramate + NADP(+) = UDP-N-acetyl-3-O-(1-carboxyvinyl)-alpha-D-glucosamine + NADPH + H(+). It participates in cell wall biogenesis; peptidoglycan biosynthesis. Functionally, cell wall formation. This is UDP-N-acetylenolpyruvoylglucosamine reductase from Mycolicibacterium smegmatis (strain ATCC 700084 / mc(2)155) (Mycobacterium smegmatis).